A 147-amino-acid polypeptide reads, in one-letter code: Ribosome maturation factor RimP (147 aa).

It belongs to the RimP family.

It localises to the cytoplasm. Functionally, required for maturation of 30S ribosomal subunits. This chain is Ribosome maturation factor RimP, found in Sulfurihydrogenibium azorense (strain DSM 15241 / OCM 825 / Az-Fu1).